The following is a 515-amino-acid chain: DNA-directed RNA polymerase subunit Rpo2N (515 aa).

It belongs to the RNA polymerase beta chain family. Part of the RNA polymerase complex.

Its subcellular location is the cytoplasm. The enzyme catalyses RNA(n) + a ribonucleoside 5'-triphosphate = RNA(n+1) + diphosphate. In terms of biological role, DNA-dependent RNA polymerase (RNAP) catalyzes the transcription of DNA into RNA using the four ribonucleoside triphosphates as substrates. The Rpo2 subunit (Rpo2N and Rpo2C in this organism) is implicated in DNA promoter recognition and in nucleotide binding. The protein is DNA-directed RNA polymerase subunit Rpo2N of Methanothermobacter thermautotrophicus (strain Winter) (Methanobacterium thermoautotrophicum).